The following is a 424-amino-acid chain: Serine hydroxymethyltransferase (424 aa).

(6S)-5,6,7,8-tetrahydrofolate contacts are provided by residues Leu118 and 122-124; that span reads GHL. An N6-(pyridoxal phosphate)lysine modification is found at Lys227. 351–353 lines the (6S)-5,6,7,8-tetrahydrofolate pocket; that stretch reads SPF.

This sequence belongs to the SHMT family. In terms of assembly, homodimer. The cofactor is pyridoxal 5'-phosphate.

The protein localises to the cytoplasm. The catalysed reaction is (6R)-5,10-methylene-5,6,7,8-tetrahydrofolate + glycine + H2O = (6S)-5,6,7,8-tetrahydrofolate + L-serine. Its pathway is one-carbon metabolism; tetrahydrofolate interconversion. It functions in the pathway amino-acid biosynthesis; glycine biosynthesis; glycine from L-serine: step 1/1. Its function is as follows. Catalyzes the reversible interconversion of serine and glycine with tetrahydrofolate (THF) serving as the one-carbon carrier. This reaction serves as the major source of one-carbon groups required for the biosynthesis of purines, thymidylate, methionine, and other important biomolecules. Also exhibits THF-independent aldolase activity toward beta-hydroxyamino acids, producing glycine and aldehydes, via a retro-aldol mechanism. In Thermosipho melanesiensis (strain DSM 12029 / CIP 104789 / BI429), this protein is Serine hydroxymethyltransferase.